The primary structure comprises 190 residues: Peptidoglycan recognition protein 1 (190 aa).

The N-terminal stretch at 1-21 is a signal peptide; that stretch reads MSRRYTPLAWVLLALLGLGAA. Gln22 carries the pyrrolidone carboxylic acid modification. Disulfide bonds link Cys24-Cys148, Cys40-Cys85, and Cys61-Cys67. Positions 46–174 constitute an N-acetylmuramoyl-L-alanine amidase domain; that stretch reads QPVRYVVVSH…RDVQQTLSPG (129 aa).

The protein belongs to the N-acetylmuramoyl-L-alanine amidase 2 family. In terms of assembly, homodimer; disulfide-linked. Synthesized only in bone marrow. The mature protein is stored in the cytoplasmic granules of eosinophils and neutrophils but is absent from monocytes, lymphocytes, or platelets.

The protein resides in the secreted. The protein localises to the cytoplasmic granule. Innate immunity protein that plays several important functions in antimicrobial and antitumor defense systems. Acts as a pattern receptor that binds to murein peptidoglycans (PGN) of Gram-positive bacteria and thus provides bactericidal activity. Forms an equimolar complex with heat shock protein HSPA1A and induces programmed cell death through apoptosis and necroptosis in tumor cell lines by activating the TNFR1 receptor on the target cell membrane. In addition, acts in complex with the Ca(2+)-binding protein S100A4 as a chemoattractant able to induce lymphocyte movement. Mechanistically, this complex acts as a ligand of the chemotactic receptors CCR5 and CXCR3 which are present on the cells of the immune system. Also promotes the activation of lymphocytes that become able to kill virus-infected cells as well as tumor cells by modulating the spectrum of their target-cell specificity. Induction of cytotoxicity on monocyte surface requires interaction with TREM1 receptor. The sequence is that of Peptidoglycan recognition protein 1 (PGLYRP1) from Bos taurus (Bovine).